We begin with the raw amino-acid sequence, 301 residues long: Methionyl-tRNA formyltransferase (301 aa).

109–112 serves as a coordination point for (6S)-5,6,7,8-tetrahydrofolate; that stretch reads SLLP.

This sequence belongs to the Fmt family.

It carries out the reaction L-methionyl-tRNA(fMet) + (6R)-10-formyltetrahydrofolate = N-formyl-L-methionyl-tRNA(fMet) + (6S)-5,6,7,8-tetrahydrofolate + H(+). Attaches a formyl group to the free amino group of methionyl-tRNA(fMet). The formyl group appears to play a dual role in the initiator identity of N-formylmethionyl-tRNA by promoting its recognition by IF2 and preventing the misappropriation of this tRNA by the elongation apparatus. This chain is Methionyl-tRNA formyltransferase, found in Novosphingobium aromaticivorans (strain ATCC 700278 / DSM 12444 / CCUG 56034 / CIP 105152 / NBRC 16084 / F199).